The primary structure comprises 228 residues: MAEHATGVYGHPYPRVDQYGNPVPPVDQYGNPVPDEPAPRDTAAGYVAPPDPAVSTGDYGLAGAEAPHPHESAVMSGAAAAAVAPGGEAYTRDGGGVVPPAGEKTFAYEGTVSAAGVTGASGQLQPTTREEGHTTLGETLRRSGKSSSSSSSSSEDDGQGGRRKKKSIKEKIKEKLPGSHKQEEQKQAGHTAPAAGTGTGTGTHAAGKHEKKGIVEKIKEKLPGHGHH.

2 disordered regions span residues 1–68 (MAEH…EAPH) and 115–228 (AGVT…HGHH). Composition is skewed to basic and acidic residues over residues 169-187 (KEKIKEKLPGSHKQEEQKQ) and 212-228 (KGIVEKIKEKLPGHGHH).

This sequence belongs to the plant dehydrin family.

The polypeptide is Dehydrin Rab25 (RAB25) (Oryza sativa subsp. japonica (Rice)).